Here is a 1488-residue protein sequence, read N- to C-terminus: Neuropathy target esterase sws (1488 aa).

At 1–34 (MDVLELLRASVNGCYNTLFSDAWSQYVSKQIATT) the chain is on the lumenal side. A helical transmembrane segment spans residues 35-55 (TYWYGALLAIGALFIAWFLYF). Over 56–1488 (KRLASLRLRD…ENVTEADTKN (1433 aa)) the chain is Cytoplasmic. 175-302 (IFGHFEKPIF…IRVIQVIMIR (128 aa)) is an a nucleoside 3',5'-cyclic phosphate binding site. Disordered regions lie at residues 339–379 (PGPV…DPNP) and 402–440 (QQQQ…ATIT). 2 stretches are compositionally biased toward low complexity: residues 344-356 (SQAS…MASR) and 402-413 (QQQQSSGVSVGG). Positions 415-424 (HRSSGACTPT) are enriched in polar residues. A nucleoside 3',5'-cyclic phosphate-binding positions include 458–587 (ELGL…VVRR) and 576–703 (IVLD…LSHR). Residues 929 to 1095 (LVLGGGGARG…VNNLPGHLWR (167 aa)) enclose the PNPLA domain. Positions 933 to 938 (GGGARG) match the GXGXXG motif. The GXSXG signature appears at 960 to 964 (GVSIG). Residue serine 962 is the Nucleophile of the active site. Aspartate 1082 functions as the Proton acceptor in the catalytic mechanism. The DGA/G motif lies at 1082–1084 (DGG). Serine 1176 carries the phosphoserine modification. Disordered regions lie at residues 1348–1376 (RKVD…QGNL) and 1398–1488 (EHKR…DTKN). Basic residues predominate over residues 1399–1410 (HKRRQKSKHKRD). The segment covering 1440–1452 (IDAKLDQLRKLQQ) has biased composition (basic and acidic residues). The segment covering 1456–1470 (QGNESEQEQEQEQEQ) has biased composition (acidic residues).

Belongs to the NTE family. As to quaternary structure, interacts with Pka-C3; interaction inhibits the catalytic function of Pka-C3 and the esterase activity of sws.

It localises to the endoplasmic reticulum membrane. It carries out the reaction a 1-acyl-sn-glycero-3-phosphocholine + H2O = sn-glycerol 3-phosphocholine + a fatty acid + H(+). Phospholipase B that deacylates intracellular phosphatidylcholine (PtdCho), generating glycerophosphocholine (GroPtdCho). This deacylation occurs at both sn-2 and sn-1 positions of PtdCho. Its specific chemical modification by certain organophosphorus (OP) compounds leads to distal axonopathy. Plays a role in the signaling mechanism between neurons and glia that regulates glia wrapping during development of the adult brain. Essential for membrane lipid homeostasis and cell survival in both neurons and glia of the adult brain. The sequence is that of Neuropathy target esterase sws from Drosophila mojavensis (Fruit fly).